A 301-amino-acid chain; its full sequence is Diaminopimelate epimerase (301 aa).

Substrate is bound by residues N15, Q47, and N67. The Proton donor role is filled by C76. Residues G77 to N78, N163, N197, and E215 to R216 each bind substrate. C224 serves as the catalytic Proton acceptor. G225–S226 is a binding site for substrate.

The protein belongs to the diaminopimelate epimerase family. Homodimer.

It localises to the cytoplasm. The enzyme catalyses (2S,6S)-2,6-diaminopimelate = meso-2,6-diaminopimelate. It participates in amino-acid biosynthesis; L-lysine biosynthesis via DAP pathway; DL-2,6-diaminopimelate from LL-2,6-diaminopimelate: step 1/1. Functionally, catalyzes the stereoinversion of LL-2,6-diaminopimelate (L,L-DAP) to meso-diaminopimelate (meso-DAP), a precursor of L-lysine and an essential component of the bacterial peptidoglycan. This is Diaminopimelate epimerase from Rhizobium etli (strain ATCC 51251 / DSM 11541 / JCM 21823 / NBRC 15573 / CFN 42).